The sequence spans 174 residues: 3-hydroxyanthranilate 3,4-dioxygenase (174 aa).

Position 47 (Arg47) interacts with O2. Fe cation-binding residues include His51, Glu57, and His95. Glu57 is a substrate binding site. The substrate site is built by Arg99 and Glu110. Cys125, Cys128, Cys162, and Cys165 together coordinate Fe cation.

Belongs to the 3-HAO family. In terms of assembly, homodimer. Fe(2+) serves as cofactor.

It catalyses the reaction 3-hydroxyanthranilate + O2 = (2Z,4Z)-2-amino-3-carboxymuconate 6-semialdehyde. It functions in the pathway cofactor biosynthesis; NAD(+) biosynthesis; quinolinate from L-kynurenine: step 3/3. With respect to regulation, inhibited by 4-chloro-3-hydroxyanthranilate. Mechanism of inactivation involves the oxidation of the catalytic active site Fe(2+) to the catalytically inactive Fe(3+) oxidation state, superoxide production, and formation of two disulfide bonds between Cys-125 and Cys-128, and Cys-162 and Cys-165. Enzyme can be reactivated under reducing conditions. In terms of biological role, catalyzes the oxidative ring opening of 3-hydroxyanthranilate to 2-amino-3-carboxymuconate semialdehyde, which spontaneously cyclizes to quinolinate. This is 3-hydroxyanthranilate 3,4-dioxygenase from Cupriavidus metallidurans (strain ATCC 43123 / DSM 2839 / NBRC 102507 / CH34) (Ralstonia metallidurans).